We begin with the raw amino-acid sequence, 754 residues long: MAEQWELDEEGIRRLGALTLEQPELVESLSLQGSYAGKIHSIGDAFRNFKNLRSLDLSRNLITSLKGIQYLCSLQDLNLYYNNIPSLVEVSRLQPLPFLKELDLRLNPVVRKDTDYRLFAVYTLQTLEKLDDRTVREGERKAAKLHFSQLGNSENFLLEVEKSSREKTMKNCVTGESSASKVSANVDSRIEMDSNKGLFIPFPNREIKDSLSTSATQGNGTRDQKLDTFPLGTQTQEVARREMPSDNHQEDEFRHYSPRQSTVRSPEKMTREGYQVSFLDNKSSGSSPEKELIPKPDTFHLTHDASLSKCLDVGDSSQIHPYQLPSDVGLENYDSCYSQTLSLHGSLGKRPQRSKNYQEYSIKPSNDIKTTASHSCGDLLTSLSNPDSSTGRLLKLSSDLYATTHFNSDPAVLVNVEQQLSTSLDDLTPAHGSVPNNAVLGNRTTPLRTLLLSPGTSEHRKIFTKRSLSPSKRGFKWKDNILANLNLKHGFQDATGSEPLSSDLGSLHGLAGNHSPPISARTPHVATVLRQLLELVDKHWNGSGSLLLNKKFLGPARDLLLSLVVPAPSQPRCCSHPEDTMKAFCRRELELKEAAQLVPNDMESLKQKLVRVLEENLILSEKIQQLEEGAAISIVSGQQSHTYDDLLHKNQQLTMQVACLNQELAQLKKLEKTVAILHESQRSLVVTNEYLLQQLNKEPKGYSGKALLPPEKGHHLGRSSPFGKSTLSSSSPVAHETGQYLIQSVLDAAPEPGL.

2 LRR repeats span residues 51–72 and 73–94; these read NLRS…QYLC and SLQD…SRLQ. In terms of domain architecture, LRRCT spans 107 to 146; it reads NPVVRKDTDYRLFAVYTLQTLEKLDDRTVREGERKAAKLH. Residues 241–255 are compositionally biased toward basic and acidic residues; the sequence is REMPSDNHQEDEFRH. Positions 241–270 are disordered; sequence REMPSDNHQEDEFRHYSPRQSTVRSPEKMT. Positions 600 to 680 form a coiled coil; it reads NDMESLKQKL…EKTVAILHES (81 aa). The tract at residues 702–734 is disordered; it reads YSGKALLPPEKGHHLGRSSPFGKSTLSSSSPVA. Residues 722 to 732 are compositionally biased toward polar residues; sequence FGKSTLSSSSP.

The sequence is that of Leucine-rich repeat-containing protein 36 (LRRC36) from Homo sapiens (Human).